We begin with the raw amino-acid sequence, 391 residues long: 3-ketoacyl-CoA thiolase (391 aa).

The Acyl-thioester intermediate role is filled by cysteine 95. Active-site proton acceptor residues include histidine 347 and cysteine 377.

This sequence belongs to the thiolase-like superfamily. Thiolase family. As to quaternary structure, heterotetramer of two alpha chains (FadB) and two beta chains (FadA).

The protein resides in the cytoplasm. The catalysed reaction is an acyl-CoA + acetyl-CoA = a 3-oxoacyl-CoA + CoA. The protein operates within lipid metabolism; fatty acid beta-oxidation. In terms of biological role, catalyzes the final step of fatty acid oxidation in which acetyl-CoA is released and the CoA ester of a fatty acid two carbons shorter is formed. This chain is 3-ketoacyl-CoA thiolase, found in Pseudomonas syringae pv. syringae (strain B728a).